The sequence spans 317 residues: Acetyl-coenzyme A carboxylase carboxyl transferase subunit alpha (317 aa).

The CoA carboxyltransferase C-terminal domain occupies 33–294 (NLDDEIARLQ…KQRLLDDLKE (262 aa)).

Belongs to the AccA family. As to quaternary structure, acetyl-CoA carboxylase is a heterohexamer composed of biotin carboxyl carrier protein (AccB), biotin carboxylase (AccC) and two subunits each of ACCase subunit alpha (AccA) and ACCase subunit beta (AccD).

It is found in the cytoplasm. The catalysed reaction is N(6)-carboxybiotinyl-L-lysyl-[protein] + acetyl-CoA = N(6)-biotinyl-L-lysyl-[protein] + malonyl-CoA. It participates in lipid metabolism; malonyl-CoA biosynthesis; malonyl-CoA from acetyl-CoA: step 1/1. Functionally, component of the acetyl coenzyme A carboxylase (ACC) complex. First, biotin carboxylase catalyzes the carboxylation of biotin on its carrier protein (BCCP) and then the CO(2) group is transferred by the carboxyltransferase to acetyl-CoA to form malonyl-CoA. This Pasteurella multocida (strain Pm70) protein is Acetyl-coenzyme A carboxylase carboxyl transferase subunit alpha.